Reading from the N-terminus, the 89-residue chain is Putative regulatory protein Dalk_1931 (89 aa).

The protein belongs to the RemA family.

The chain is Putative regulatory protein Dalk_1931 from Desulfatibacillum aliphaticivorans.